A 316-amino-acid chain; its full sequence is tRNA-dihydrouridine(16) synthase (316 aa).

FMN contacts are provided by residues 7–9 (PME) and Q68. C98 acts as the Proton donor in catalysis. Residues K139, 200-202 (NGE), and 224-225 (GR) each bind FMN.

Belongs to the Dus family. DusC subfamily. The cofactor is FMN.

It catalyses the reaction 5,6-dihydrouridine(16) in tRNA + NADP(+) = uridine(16) in tRNA + NADPH + H(+). The enzyme catalyses 5,6-dihydrouridine(16) in tRNA + NAD(+) = uridine(16) in tRNA + NADH + H(+). Its function is as follows. Catalyzes the synthesis of 5,6-dihydrouridine (D), a modified base found in the D-loop of most tRNAs, via the reduction of the C5-C6 double bond in target uridines. Specifically modifies U16 in tRNAs. The sequence is that of tRNA-dihydrouridine(16) synthase from Escherichia coli O157:H7.